Reading from the N-terminus, the 407-residue chain is Spore germination protein KC (407 aa).

The signal sequence occupies residues 1–20 (MVRKCLLAVLMLLSVIVLPG). Residue C21 is the site of N-palmitoyl cysteine attachment. A lipid anchor (S-diacylglycerol cysteine) is attached at C21.

This sequence belongs to the GerABKC lipoprotein family.

It is found in the cell membrane. In terms of biological role, involved in the germination response to the combination of glucose, fructose, L-asparagine, and KCl. This is Spore germination protein KC (gerKC) from Bacillus subtilis (strain 168).